Reading from the N-terminus, the 230-residue chain is Ribonuclease 3 (230 aa).

The 128-residue stretch at 7–134 folds into the RNase III domain; it reads LEELESKLGI…VIAAIYLDKG (128 aa). A Mg(2+)-binding site is contributed by Glu-47. Asp-51 is an active-site residue. Residues Asp-120 and Glu-123 each coordinate Mg(2+). Glu-123 is an active-site residue. The region spanning 161–230 is the DRBM domain; the sequence is DYKTRLQEIL…ACKALKGLDN (70 aa).

It belongs to the ribonuclease III family. Homodimer. Mg(2+) is required as a cofactor.

The protein resides in the cytoplasm. The catalysed reaction is Endonucleolytic cleavage to 5'-phosphomonoester.. Functionally, digests double-stranded RNA. Involved in the processing of primary rRNA transcript to yield the immediate precursors to the large and small rRNAs (23S and 16S). Processes some mRNAs, and tRNAs when they are encoded in the rRNA operon. Processes pre-crRNA and tracrRNA of type II CRISPR loci if present in the organism. The protein is Ribonuclease 3 of Clostridium acetobutylicum (strain ATCC 824 / DSM 792 / JCM 1419 / IAM 19013 / LMG 5710 / NBRC 13948 / NRRL B-527 / VKM B-1787 / 2291 / W).